Reading from the N-terminus, the 441-residue chain is Deoxyguanosinetriphosphate triphosphohydrolase-like protein (441 aa).

An HD domain is found at 62–255 (RLTHSLEAAQ…MELADDIAYG (194 aa)).

Belongs to the dGTPase family. Type 2 subfamily.

This chain is Deoxyguanosinetriphosphate triphosphohydrolase-like protein (dgt), found in Vibrio cholerae serotype O1 (strain ATCC 39541 / Classical Ogawa 395 / O395).